The following is a 79-amino-acid chain: Putative defensin-like protein 309 (79 aa).

An N-terminal signal peptide occupies residues 1–19 (MKILAFFIFVLLIFSCSSS). Disulfide bonds link cysteine 31/cysteine 50, cysteine 37/cysteine 55, and cysteine 41/cysteine 57.

Belongs to the DEFL family.

The protein localises to the secreted. The chain is Putative defensin-like protein 309 from Arabidopsis thaliana (Mouse-ear cress).